The chain runs to 202 residues: Myosin regulatory light chain 10 (202 aa).

A disordered region spans residues 1–21; the sequence is MGQSSLDHGVQGPVAGTGDFG. EF-hand domains lie at 60-95, 130-165, and 166-201; these read SQIQ…LGRI, DPEE…QADR, and FSEE…GEEK. 4 residues coordinate Ca(2+): Asp73, Asn75, Asp77, and Asp84.

In terms of assembly, myosin is a hexamer of 2 heavy chains and 4 light chains. As to expression, specifically expressed in precursor B- and T-lymphocytes.

The protein is Myosin regulatory light chain 10 (Myl10) of Mus musculus (Mouse).